Reading from the N-terminus, the 237-residue chain is Demethylmenaquinone methyltransferase (237 aa).

S-adenosyl-L-methionine is bound by residues Thr58, Asp79, and 106–107; that span reads NA.

This sequence belongs to the class I-like SAM-binding methyltransferase superfamily. MenG/UbiE family.

It carries out the reaction a 2-demethylmenaquinol + S-adenosyl-L-methionine = a menaquinol + S-adenosyl-L-homocysteine + H(+). It functions in the pathway quinol/quinone metabolism; menaquinone biosynthesis; menaquinol from 1,4-dihydroxy-2-naphthoate: step 2/2. In terms of biological role, methyltransferase required for the conversion of demethylmenaquinol (DMKH2) to menaquinol (MKH2). The sequence is that of Demethylmenaquinone methyltransferase from Anoxybacillus flavithermus (strain DSM 21510 / WK1).